The following is a 365-amino-acid chain: S-adenosylmethionine:tRNA ribosyltransferase-isomerase (365 aa).

The protein belongs to the QueA family. Monomer.

The protein localises to the cytoplasm. It carries out the reaction 7-aminomethyl-7-carbaguanosine(34) in tRNA + S-adenosyl-L-methionine = epoxyqueuosine(34) in tRNA + adenine + L-methionine + 2 H(+). It participates in tRNA modification; tRNA-queuosine biosynthesis. Transfers and isomerizes the ribose moiety from AdoMet to the 7-aminomethyl group of 7-deazaguanine (preQ1-tRNA) to give epoxyqueuosine (oQ-tRNA). In Rickettsia peacockii (strain Rustic), this protein is S-adenosylmethionine:tRNA ribosyltransferase-isomerase.